The sequence spans 340 residues: Outer membrane protein B (340 aa).

An N-terminal signal peptide occupies residues 1-26; it reads MSSKLVNYLRLTFLSFLGIASTSLDA.

This sequence belongs to the chlamydial OMP family.

It localises to the cell outer membrane. This is Outer membrane protein B (ompB) from Chlamydia trachomatis serovar D (strain ATCC VR-885 / DSM 19411 / UW-3/Cx).